A 369-amino-acid polypeptide reads, in one-letter code: tRNA-specific 2-thiouridylase MnmA (369 aa).

Residues 11 to 18 and methionine 37 each bind ATP; that span reads GMSGGVDS. Positions 97-99 are interaction with target base in tRNA; it reads NPD. The Nucleophile role is filled by cysteine 102. A disulfide bridge links cysteine 102 with cysteine 199. Glycine 127 contributes to the ATP binding site. Positions 149–151 are interaction with tRNA; that stretch reads KDQ. The Cysteine persulfide intermediate role is filled by cysteine 199. An interaction with tRNA region spans residues 311-312; it reads RY.

Belongs to the MnmA/TRMU family. In terms of assembly, interacts with TusE.

Its subcellular location is the cytoplasm. It catalyses the reaction S-sulfanyl-L-cysteinyl-[protein] + uridine(34) in tRNA + AH2 + ATP = 2-thiouridine(34) in tRNA + L-cysteinyl-[protein] + A + AMP + diphosphate + H(+). Functionally, catalyzes the 2-thiolation of uridine at the wobble position (U34) of tRNA(Lys), tRNA(Glu) and tRNA(Gln), leading to the formation of s(2)U34, the first step of tRNA-mnm(5)s(2)U34 synthesis. Sulfur is provided by IscS, via a sulfur-relay system. Binds ATP and its substrate tRNAs. The sequence is that of tRNA-specific 2-thiouridylase MnmA from Enterobacter sp. (strain 638).